Here is a 204-residue protein sequence, read N- to C-terminus: Tetraspanin-13 (204 aa).

Residues 1 to 19 are Cytoplasmic-facing; it reads MVCGGFSCSKNCLCALNLL. Residues 20–40 traverse the membrane as a helical segment; it reads YTLVSLLLIGIAAWGIGFGLI. The Extracellular portion of the chain corresponds to 41 to 44; the sequence is SSLR. The helical transmembrane segment at 45–65 threads the bilayer; the sequence is VVGVVIAVGIFLFLIALVGLI. Topologically, residues 66–72 are cytoplasmic; it reads GAVKHHQ. A helical transmembrane segment spans residues 73–93; that stretch reads VLLFFYMIILLLVFIVQFSVS. The Extracellular portion of the chain corresponds to 94–167; sequence CACLALNREQ…IGEYAGEVLR (74 aa). Asparagine 113 and asparagine 137 each carry an N-linked (GlcNAc...) asparagine glycan. Phosphoserine is present on serine 143. Residues 168 to 188 traverse the membrane as a helical segment; the sequence is FVGGIGLFFSFTEILGVWLTY. Residues 189–204 are Cytoplasmic-facing; it reads RYRNQKDPRANPSAFL.

Belongs to the tetraspanin (TM4SF) family.

It is found in the membrane. In Rattus norvegicus (Rat), this protein is Tetraspanin-13 (Tspan13).